A 210-amino-acid chain; its full sequence is Probable glutathione peroxidase 8 (210 aa).

A helical transmembrane segment spans residues 21-40 (VLLSMTVGVGCLLLLQTQLL).

This sequence belongs to the glutathione peroxidase family.

The protein localises to the membrane. It catalyses the reaction 2 glutathione + H2O2 = glutathione disulfide + 2 H2O. In Tetraodon nigroviridis (Spotted green pufferfish), this protein is Probable glutathione peroxidase 8 (gpx8).